The chain runs to 312 residues: tRNA uridine(34) hydroxylase (312 aa).

Residues 123–217 (SDPEVLLIDT…YLEEVPQEQS (95 aa)) form the Rhodanese domain. Cysteine 177 serves as the catalytic Cysteine persulfide intermediate. A compositionally biased stretch (basic and acidic residues) spans 282–293 (ARERQKQIELAR). The segment at 282–312 (ARERQKQIELARQRNQPHPLGRDPRQSTLEN) is disordered.

The protein belongs to the TrhO family.

The enzyme catalyses uridine(34) in tRNA + AH2 + O2 = 5-hydroxyuridine(34) in tRNA + A + H2O. Catalyzes oxygen-dependent 5-hydroxyuridine (ho5U) modification at position 34 in tRNAs. In Pseudomonas aeruginosa (strain UCBPP-PA14), this protein is tRNA uridine(34) hydroxylase.